The primary structure comprises 135 residues: Ribonuclease VapC26 (135 aa).

Residues 1–118 (MIIDTSALLA…TRTILTLDRR (118 aa)) enclose the PINc domain. The Mg(2+) site is built by aspartate 4 and aspartate 97.

It belongs to the PINc/VapC protein family. Mg(2+) serves as cofactor.

Its function is as follows. Toxic component of a type II toxin-antitoxin (TA) system. An RNase. Upon expression in M.smegmatis inhibits colony formation. Its toxic effect is neutralized by coexpression with cognate antitoxin VapB26. This chain is Ribonuclease VapC26, found in Mycobacterium tuberculosis (strain ATCC 25618 / H37Rv).